Here is a 159-residue protein sequence, read N- to C-terminus: MDATFWAFIALVIFVAIVVYMKVPGMIGRTLDERADRIKKELEEARTLREEAQQLLAEYHRKCKEAEKEAGDIVASAEREAKALLEEAKRATEEYVARRNKLAEQKIATAETDAINAVRASAVDLAVAAAGSILAEKVDAKAAGNLFNDALAQVKSHLN.

The chain crosses the membrane as a helical span at residues 1-21; sequence MDATFWAFIALVIFVAIVVYM.

This sequence belongs to the ATPase B chain family. In terms of assembly, F-type ATPases have 2 components, F(1) - the catalytic core - and F(0) - the membrane proton channel. F(1) has five subunits: alpha(3), beta(3), gamma(1), delta(1), epsilon(1). F(0) has three main subunits: a(1), b(2) and c(10-14). The alpha and beta chains form an alternating ring which encloses part of the gamma chain. F(1) is attached to F(0) by a central stalk formed by the gamma and epsilon chains, while a peripheral stalk is formed by the delta and b chains.

The protein localises to the cell inner membrane. F(1)F(0) ATP synthase produces ATP from ADP in the presence of a proton or sodium gradient. F-type ATPases consist of two structural domains, F(1) containing the extramembraneous catalytic core and F(0) containing the membrane proton channel, linked together by a central stalk and a peripheral stalk. During catalysis, ATP synthesis in the catalytic domain of F(1) is coupled via a rotary mechanism of the central stalk subunits to proton translocation. In terms of biological role, component of the F(0) channel, it forms part of the peripheral stalk, linking F(1) to F(0). This chain is ATP synthase subunit b 2, found in Brucella ovis (strain ATCC 25840 / 63/290 / NCTC 10512).